An 872-amino-acid polypeptide reads, in one-letter code: Alanine--tRNA ligase (872 aa).

The Zn(2+) site is built by H567, H571, C669, and H673.

The protein belongs to the class-II aminoacyl-tRNA synthetase family. It depends on Zn(2+) as a cofactor.

The protein localises to the cytoplasm. The catalysed reaction is tRNA(Ala) + L-alanine + ATP = L-alanyl-tRNA(Ala) + AMP + diphosphate. Functionally, catalyzes the attachment of alanine to tRNA(Ala) in a two-step reaction: alanine is first activated by ATP to form Ala-AMP and then transferred to the acceptor end of tRNA(Ala). Also edits incorrectly charged Ser-tRNA(Ala) and Gly-tRNA(Ala) via its editing domain. The protein is Alanine--tRNA ligase of Streptococcus agalactiae serotype III (strain NEM316).